A 448-amino-acid polypeptide reads, in one-letter code: StAR-related lipid transfer protein 3 (448 aa).

Residues 47–219 form the MENTAL domain; it reads FSDVRRTFCL…YSPPESLAGS (173 aa). The next 4 helical transmembrane spans lie at 53 to 73, 96 to 116, 122 to 142, and 150 to 170; these read TFCLFVTFDLLFITLLWIIEL, FFDIFLLAVFRFLCLQLGYAA, WWVIAITTLVTTAFLIAKVIL, and AFGYVLPITSFVVAWLETWFL. The short motif at 208–214 is the FFAT element; the sequence is QFYSPPE. Residues 232–445 enclose the START domain; sequence AVTEQEKAFV…LRQRINEVHV (214 aa).

It belongs to the STARD3 family. Homodimer. Phosphorylated. Phosphorylation allows the tethering of two membranes that participates in the formation of ER-endosome contacts. Phosphorylation of FFAT motif drives membrane tethering between the endoplasmic reticulum and late endosomes that in turn allows the efficient transport of sterol mediated by the START domain.

The protein resides in the late endosome membrane. It carries out the reaction cholesterol(in) = cholesterol(out). Its function is as follows. Sterol-binding protein that mediates cholesterol transport from the endoplasmic reticulum to endosomes. The sterol transport mechanism is triggered by phosphorylation of FFAT motif that leads to membrane tethering between the endoplasmic reticulum and late endosomes. Acts as a lipid transfer protein that redirects sterol to the endosome at the expense of the cell membrane and favors membrane formation inside endosomes. This is StAR-related lipid transfer protein 3 from Danio rerio (Zebrafish).